The primary structure comprises 371 residues: Probable dual-specificity RNA methyltransferase RlmN (371 aa).

Glu-113 functions as the Proton acceptor in the catalytic mechanism. The Radical SAM core domain occupies 119–352; the sequence is QSWGNSVCVT…TTVRREMGGE (234 aa). Cys-126 and Cys-357 form a disulfide bridge. [4Fe-4S] cluster is bound by residues Cys-133, Cys-137, and Cys-140. Residues 182–183, Ser-214, 237–239, and Asn-313 each bind S-adenosyl-L-methionine; these read GE and SLH. Catalysis depends on Cys-357, which acts as the S-methylcysteine intermediate.

This sequence belongs to the radical SAM superfamily. RlmN family. The cofactor is [4Fe-4S] cluster.

It localises to the cytoplasm. The enzyme catalyses adenosine(2503) in 23S rRNA + 2 reduced [2Fe-2S]-[ferredoxin] + 2 S-adenosyl-L-methionine = 2-methyladenosine(2503) in 23S rRNA + 5'-deoxyadenosine + L-methionine + 2 oxidized [2Fe-2S]-[ferredoxin] + S-adenosyl-L-homocysteine. The catalysed reaction is adenosine(37) in tRNA + 2 reduced [2Fe-2S]-[ferredoxin] + 2 S-adenosyl-L-methionine = 2-methyladenosine(37) in tRNA + 5'-deoxyadenosine + L-methionine + 2 oxidized [2Fe-2S]-[ferredoxin] + S-adenosyl-L-homocysteine. Its function is as follows. Specifically methylates position 2 of adenine 2503 in 23S rRNA and position 2 of adenine 37 in tRNAs. This is Probable dual-specificity RNA methyltransferase RlmN from Symbiobacterium thermophilum (strain DSM 24528 / JCM 14929 / IAM 14863 / T).